The sequence spans 127 residues: Putative 2Fe-2S ferredoxin (127 aa).

Residues cysteine 23, cysteine 54, and cysteine 58 each contribute to the [2Fe-2S] cluster site.

This sequence belongs to the 2Fe2S Shethna-type ferredoxin family. Requires [2Fe-2S] cluster as cofactor.

Its function is as follows. Ferredoxins are iron-sulfur proteins that transfer electrons in a wide variety of metabolic reactions. This is Putative 2Fe-2S ferredoxin (cbiW) from Priestia megaterium (Bacillus megaterium).